Here is a 656-residue protein sequence, read N- to C-terminus: MGKIIELNEALANQIAAGEVVERPASVVKELVENSIDAGSSKITVSVEEAGLRLIEVTDNGLGLEKEDVALALRRHATSKIKDSADLFRIRTLGFRGEALPSIASVSQMTIETSNAQEEAGTKLIAKGGTIETLEPLAKRLGTKISVANLFYNTPARLKYIKSLQAELSHITDIINRLSLAHPEISFTLVNEGKEFLKTAGNGDLRQVIAAIYGIGTAKKMREINGSDLDFELTGYVSLPELTRANRNYITILINGRFIKNFLLNRAILEGYGNRLMVGRFPFAVLSIKIDPKLADVNVHPTKQEVRLSKERELMTLISKAIDEALSEGVLIPEALENLQGRVKEKETVSVQTELPLQNNPLYYDNVRQDFFVREEAIFEINKNDNSDSLTEQNSTDYTVNQPETGSVSEKITDRTVESSNEFTDRTPKNSVSNFGVDFDNIEKLSQQSTFPQLEYLAQLHATYLLCQSKEGLYLVDQHAAQERIKYEYWKDKIGEVSMEQQILLAPYLFTLPKNDFIVLAEKKDLLHEAGVFLEEYGENQFILREHPIWLKETEIEKSINEMIDIILSSKEFSLKKYRHDLAAMVACKSSIKANHPLDAESARALLRELATCKNPYSCAHGRPTIVHFSGDDIQKMFRRIQETHRSKAASWKDFE.

A disordered region spans residues 385-427 (DNSDSLTEQNSTDYTVNQPETGSVSEKITDRTVESSNEFTDRT). A compositionally biased stretch (polar residues) spans 387-410 (SDSLTEQNSTDYTVNQPETGSVSE). Residues 411-427 (KITDRTVESSNEFTDRT) show a composition bias toward basic and acidic residues.

The protein belongs to the DNA mismatch repair MutL/HexB family.

In terms of biological role, this protein is involved in the repair of mismatches in DNA. It is required for dam-dependent methyl-directed DNA mismatch repair. May act as a 'molecular matchmaker', a protein that promotes the formation of a stable complex between two or more DNA-binding proteins in an ATP-dependent manner without itself being part of a final effector complex. The polypeptide is DNA mismatch repair protein MutL (Lactococcus lactis subsp. cremoris (strain SK11)).